An 896-amino-acid chain; its full sequence is Translation initiation factor IF-2 (896 aa).

Basic and acidic residues predominate over residues 117–174 (AEAEAKAKAEAEAKAKVDAEAKVKAKAEAEAKAKAKVQTEKPAAETAEDKAAKAEEAK). The tract at residues 117–303 (AEAEAKAKAE…TRSVAPESMD (187 aa)) is disordered. Low complexity predominate over residues 175 to 195 (LLAAQDAVAKAKANEEASAAA). The span at 196–227 (DEARRLAEENEKRWAEEEKARKEAEKSVDHHV) shows a compositional bias: basic and acidic residues. The segment covering 254-268 (PSANAGNNANANAGA) has biased composition (low complexity). The tr-type G domain occupies 396–563 (PRAPVVTIMG…GILLEAEVLE (168 aa)). A G1 region spans residues 405-412 (GHVDHGKT). 405–412 (GHVDHGKT) provides a ligand contact to GTP. A G2 region spans residues 430-434 (GITQH). The segment at 451-454 (DTPG) is G3. GTP-binding positions include 451–455 (DTPGH) and 505–508 (NKID). Positions 505 to 508 (NKID) are G4. The segment at 541–543 (SAK) is G5.

Belongs to the TRAFAC class translation factor GTPase superfamily. Classic translation factor GTPase family. IF-2 subfamily.

The protein localises to the cytoplasm. One of the essential components for the initiation of protein synthesis. Protects formylmethionyl-tRNA from spontaneous hydrolysis and promotes its binding to the 30S ribosomal subunits. Also involved in the hydrolysis of GTP during the formation of the 70S ribosomal complex. The chain is Translation initiation factor IF-2 from Shewanella pealeana (strain ATCC 700345 / ANG-SQ1).